The primary structure comprises 317 residues: MSITLNSGYEMPSVGFGCWKVDKATCADTIYNAIKVGYRLFDGAEDYGNEKEVGEGINRALDEGLVARDELFVVSKLWNSFHDPKNVEKALDRTLSDLKVDYLDLFLIHFPIAFKFVPFEEKYPPGFYCGDGDKFIYEGVPIIDTWRALEKMVEKGKIRSIGISNFPGALIQDLLRGAKIKPAVLQIEHHPYLQQPRLIEYVQSQGIAITAYSSFGPQSFVELNHPRVKDVKPLFEHDVIKSVAEKANKTPAQVLLRWATQRGLAVIPKSNNPDRLLSNLKVNDFDLSQEDFKEISKLDIELRFNNPWDWDKIPTFV.

Tyr47 (proton donor) is an active-site residue. Residue His109 participates in substrate binding. Residues 164-165, 213-222, and 269-279 each bind NADP(+); these read SN, SSFGPQSFVE, and KSNNPDRLLSN.

It belongs to the aldo/keto reductase family.

It carries out the reaction xylitol + NAD(+) = D-xylose + NADH + H(+). It catalyses the reaction xylitol + NADP(+) = D-xylose + NADPH + H(+). Its pathway is carbohydrate metabolism; D-xylose degradation. Its function is as follows. Reduces D-xylose into xylitol. Preferentially utilizes NADPH as a cosubstrate. The chain is NADPH-dependent D-xylose reductase (XYL1) from Meyerozyma guilliermondii (strain ATCC 6260 / CBS 566 / DSM 6381 / JCM 1539 / NBRC 10279 / NRRL Y-324) (Yeast).